Reading from the N-terminus, the 219-residue chain is Suppressor-of-stellate-like protein (219 aa).

Positions 194–219 (SAESPPIKVESSVSKSPSWLRNVPNF) are disordered. A compositionally biased stretch (polar residues) spans 204–219 (SSVSKSPSWLRNVPNF).

Belongs to the casein kinase 2 subunit beta family.

In Drosophila melanogaster (Fruit fly), this protein is Suppressor-of-stellate-like protein (Ssl).